The chain runs to 467 residues: 3-isopropylmalate dehydratase large subunit (467 aa).

Residues Cys347, Cys407, and Cys410 each coordinate [4Fe-4S] cluster.

This sequence belongs to the aconitase/IPM isomerase family. LeuC type 1 subfamily. Heterodimer of LeuC and LeuD. [4Fe-4S] cluster is required as a cofactor.

It catalyses the reaction (2R,3S)-3-isopropylmalate = (2S)-2-isopropylmalate. Its pathway is amino-acid biosynthesis; L-leucine biosynthesis; L-leucine from 3-methyl-2-oxobutanoate: step 2/4. Catalyzes the isomerization between 2-isopropylmalate and 3-isopropylmalate, via the formation of 2-isopropylmaleate. This Prochlorococcus marinus (strain MIT 9301) protein is 3-isopropylmalate dehydratase large subunit.